The following is a 227-amino-acid chain: UPF0758 protein CPE2144 (227 aa).

The MPN domain occupies 105-227 (KISKPSDVAK…FISLKEKDIL (123 aa)). Zn(2+) contacts are provided by His176, His178, and Asp189. Positions 176–189 (HNHPSGDPTPSRDD) match the JAMM motif motif.

It belongs to the UPF0758 family.

In Clostridium perfringens (strain 13 / Type A), this protein is UPF0758 protein CPE2144.